A 334-amino-acid polypeptide reads, in one-letter code: L-lactate dehydrogenase B chain (334 aa).

At alanine 2 the chain carries N-acetylalanine. Lysine 7 is subject to N6-acetyllysine. Position 31–53 (31–53 (QVGMACAISILGKSLADELALVD)) interacts with NAD(+). Serine 44 carries the post-translational modification Phosphoserine. The residue at position 58 (lysine 58) is an N6-acetyllysine. Residue arginine 100 coordinates NAD(+). Substrate is bound at residue arginine 107. At lysine 119 the chain carries N6-acetyllysine. Asparagine 139 serves as a coordination point for NAD(+). 2 residues coordinate substrate: asparagine 139 and arginine 170. The active-site Proton acceptor is the histidine 194. Phosphotyrosine is present on tyrosine 240. A substrate-binding site is contributed by threonine 249. Position 329 is an N6-acetyllysine (lysine 329).

Belongs to the LDH/MDH superfamily. LDH family. As to quaternary structure, homotetramer. Interacts with PTEN upstream reading frame protein MP31; the interaction leads to inhibition of mitochondrial lactate dehydrogenase activity, preventing conversion of lactate to pyruvate in mitochondria. As to expression, predominantly expressed in aerobic tissues such as cardiac muscle.

Its subcellular location is the cytoplasm. The protein resides in the mitochondrion inner membrane. It carries out the reaction (S)-lactate + NAD(+) = pyruvate + NADH + H(+). It participates in fermentation; pyruvate fermentation to lactate; (S)-lactate from pyruvate: step 1/1. In terms of biological role, interconverts simultaneously and stereospecifically pyruvate and lactate with concomitant interconversion of NADH and NAD(+). The protein is L-lactate dehydrogenase B chain (LDHB) of Homo sapiens (Human).